We begin with the raw amino-acid sequence, 822 residues long: Sodium/hydrogen exchanger 1 (822 aa).

The Extracellular portion of the chain corresponds to 1-102 (MMLRWSGIWG…FPVLDIDYLH (102 aa)). The interval 41 to 73 (SPTANTIRGAEPPRERSIGDVTTAPSEPVHHPD) is disordered. Residues 103–125 (VRTPFEISLWILLACLMKIGFHV) form a helical membrane-spanning segment. Topologically, residues 126 to 134 (IPTISSIVP) are cytoplasmic. The chain crosses the membrane as a helical span at residues 135-152 (ESCLLIVVGLLVGGLIKG). Topologically, residues 153 to 162 (VGETPPFLQS) are extracellular. The chain crosses the membrane as a helical span at residues 163–180 (DVFFLFLLPPIILDAGYF). Topologically, residues 181–190 (LPLRQFTENL) are cytoplasmic. Residues 191-219 (GTILIFAVVGTLWNAFFLGGLLYAVCLVG) traverse the membrane as a helical segment. Residues 220–226 (GEQINNI) lie on the Extracellular side of the membrane. The chain crosses the membrane as a helical span at residues 227 to 253 (GLLDTLLFGSIISAVDPVAVVAVFEEI). Residues 254–256 (HIN) lie on the Cytoplasmic side of the membrane. A helical transmembrane segment spans residues 257-287 (ELLHILVFGESLLNDAVTVVLYHLFEEFANY). The Extracellular portion of the chain corresponds to 288–291 (DSIG). The chain crosses the membrane as a helical span at residues 292 to 326 (ISDIFLGFLSFFVVALGGVFVGVVYGVIAAFTSRF). Residues 327–332 (TSHIRV) are Cytoplasmic-facing. A helical membrane pass occupies residues 333 to 345 (IEPLFVFLYSYMA). The Extracellular segment spans residues 346–354 (YLSAELFHL). Residues 355 to 375 (SGIMALIASGVVMRPYVEANI) form a helical membrane-spanning segment. Over 376 to 377 (SH) the chain is Cytoplasmic. A helical membrane pass occupies residues 378-408 (KSHTTIKYFLKMWSSVSETLIFIFLGVSTVA). The Extracellular segment spans residues 409-414 (GSHQWN). Residues 415–442 (WTFVISTLLFCLIARVLGVLVLTWFINK) form a helical membrane-spanning segment. Residues 443 to 448 (FRIVKL) are Cytoplasmic-facing. Residues 449–473 (TPKDQFIIAYGGLRGAIAFSLGYLM) traverse the membrane as a helical segment. The Extracellular portion of the chain corresponds to 474-479 (DKKHFP). Residues 480–509 (MCDLFLTAIITVIFFTVFVQGMTIRPLVDL) form a helical membrane-spanning segment. Positions 507 to 549 (VDLLAVKKKQETKRSINEEIHTQFLDHLLTGIEDICGHYGHHH) are interaction with TESC. Residues 510 to 822 (LAVKKKQETK…EGEPFIPKGE (313 aa)) are Cytoplasmic-facing. Residues 513-520 (KKKQETKR) form a PI(4,5)P2-binding region region. The interaction with CHP2 stretch occupies residues 519-549 (KRSINEEIHTQFLDHLLTGIEDICGHYGHHH). Positions 544 to 549 (HYGHHH) are confers pH-dependent PI(4,5)P2 binding. The tract at residues 556–564 (RFNKKYVKK) is PI(4,5)P2-binding region. Phosphoserine is present on residues S603 and S606. T607 carries the post-translational modification Phosphothreonine. A phosphoserine mark is found at S609 and S652. The interval 637–822 (KILRSNLQKT…EGEPFIPKGE (186 aa)) is interaction with TESC. Residues 637 to 822 (KILRSNLQKT…EGEPFIPKGE (186 aa)) form an interaction with CALM1 region. The interval 688–691 (LTVP) is interaction with PPP3CA. Residues S697, S701, and S707 each carry the phosphoserine modification. Residues 719-724 (PVITID) are interaction with PPP3CA. Residues S727, S730, and S733 each carry the phosphoserine modification. Residues 752-822 (PTRLTRGEED…EGEPFIPKGE (71 aa)) are disordered. T756 is subject to Phosphothreonine. Over residues 759-768 (EEDEDEDEDG) the composition is skewed to acidic residues. T786 is subject to Phosphothreonine. A phosphoserine mark is found at S792, S794, and S803.

This sequence belongs to the monovalent cation:proton antiporter 1 (CPA1) transporter (TC 2.A.36) family. Homodimer; dimerization is crucial for its function. Oligomer. Interacts with CALM in a calcium-dependent manner. Interacts with TESC. Interacts (via the juxtamembrane region of the cytoplasmic C-terminal domain) with CHP1; the interaction occurs at the plasma membrane in a calcium-dependent manner. Interacts with CHP2; the interaction occurs in a calcium-dependent manner. Interacts with EZR; regulates the cytoskeletal interactions of SLC9A1 and promotes stress fiber formation. Ubiquitinated, leading to its degradation by the proteasome. Ubiquitination is reduced by CHP1. Post-translationally, O-glycosylated. In terms of processing, palmitoylated; may play a major role in SLC9A1 regulation. Phosphorylation at Thr-786 increases SLC9A1 activity. Specifically dephosphorylated at Thr-786 by PPP3CA that negatively regulates SLC9A1 activity. Phosphorylation at Ser-652 by AKT1 reduces SLC9A1 binding to CALM1.

It is found in the cell membrane. The protein resides in the basolateral cell membrane. It carries out the reaction Na(+)(in) + H(+)(out) = Na(+)(out) + H(+)(in). The catalysed reaction is Li(+)(out) + H(+)(in) = Li(+)(in) + H(+)(out). The enzyme catalyses Li(+)(in) + Na(+)(out) = Li(+)(out) + Na(+)(in). Activated at acidic pHs. Inhibited by amiloride and 5-amino-substituted derivatives. Inhibited by cariporide and eniporide. Phosphatidylinositol 4,5-bisphosphate (PI(4,5)P2) and phosphatidylinositol 3,4,5-trisphosphate (PI(3,4,5)P3) bind and differentially regulate SLC9A1 activity. Functionally, electroneutral Na(+) /H(+) antiporter that extrudes Na(+) in exchange for external protons driven by the inward sodium ion chemical gradient, protecting cells from acidification that occurs from metabolism. Exchanges intracellular H(+) ions for extracellular Na(+) in 1:1 stoichiometry. Plays a key role in maintening intracellular pH neutral and cell volume, and thus is important for cell growth, proliferation, migration and survival. In addition, can transport lithium Li(+) and also functions as a Na(+)/Li(+) antiporter. SLC9A1 also functions in membrane anchoring and organization of scaffolding complexes that coordinate signaling inputs. This chain is Sodium/hydrogen exchanger 1 (SLC9A1), found in Cricetulus griseus (Chinese hamster).